The chain runs to 269 residues: MAVGKNKGVSKGGKKGSKKKVVDPFTRKDWYDVKAPNMFKNRQVGKTLVNRTQGTRIASDGLKGRVFEVSLADLQNEQDAERSFRKFKLIAESVNGRDVLCNFHGMDLTTDKLRSMVKKWQTLIECSVDVKTTDGYLLRVFCIGFTIKDSVSQRKTCYAQHSQIKNIRQRMTTIIKREIINSDLKGVVEKLLPDSIAKDIEKACQVVYPLHDVFIRKVKVLKKPRFDLSSLLELHGDGGGKAAEVSTGAASGVVVDRPEGYEPPVQESV.

Disordered stretches follow at residues M1–K20 and A249–V269.

This sequence belongs to the eukaryotic ribosomal protein eS1 family. In terms of assembly, component of the small ribosomal subunit. Mature ribosomes consist of a small (40S) and a large (60S) subunit. The 40S subunit contains about 33 different proteins and 1 molecule of RNA (18S). The 60S subunit contains about 49 different proteins and 3 molecules of RNA (28S, 5.8S and 5S).

Its subcellular location is the cytoplasm. The chain is Small ribosomal subunit protein eS1 from Anopheles darlingi (Mosquito).